Here is a 107-residue protein sequence, read N- to C-terminus: Nucleoid-associated protein Pnuc_0701 (107 aa).

This sequence belongs to the YbaB/EbfC family. Homodimer.

Its subcellular location is the cytoplasm. It is found in the nucleoid. Binds to DNA and alters its conformation. May be involved in regulation of gene expression, nucleoid organization and DNA protection. This Polynucleobacter asymbioticus (strain DSM 18221 / CIP 109841 / QLW-P1DMWA-1) (Polynucleobacter necessarius subsp. asymbioticus) protein is Nucleoid-associated protein Pnuc_0701.